The following is a 66-amino-acid chain: uncharacterized protein (66 aa).

An N-terminal signal peptide occupies residues 1 to 19 (MRRLYRHLASFFLLPSCPG).

This is an uncharacterized protein from Saccharomyces cerevisiae (strain ATCC 204508 / S288c) (Baker's yeast).